The chain runs to 554 residues: Membrane protein insertase YidC (554 aa).

5 helical membrane passes run 7 to 24 (VLWVIFFMSAVMLYDNWQ), 362 to 382 (VVGNWGWAIVLLTILIKAVFF), 436 to 456 (LPVVIQIPVFISLYWVLLASV), 475 to 495 (PFFILPVLMAVSMYVQTSLNP), and 510 to 530 (PIAFSVMFFFFPAGLVLYYVV).

Belongs to the OXA1/ALB3/YidC family. Type 1 subfamily. In terms of assembly, interacts with the Sec translocase complex via SecD. Specifically interacts with transmembrane segments of nascent integral membrane proteins during membrane integration.

It is found in the cell inner membrane. In terms of biological role, required for the insertion and/or proper folding and/or complex formation of integral membrane proteins into the membrane. Involved in integration of membrane proteins that insert both dependently and independently of the Sec translocase complex, as well as at least some lipoproteins. Aids folding of multispanning membrane proteins. The polypeptide is Membrane protein insertase YidC (Burkholderia vietnamiensis (strain G4 / LMG 22486) (Burkholderia cepacia (strain R1808))).